Here is a 249-residue protein sequence, read N- to C-terminus: Very-long-chain (3R)-3-hydroxyacyl-CoA dehydratase 1 (249 aa).

Residues 1–22 (MASSEEDGTNGGASEAGEEKEA) are disordered. Residues 1-36 (MASSEEDGTNGGASEAGEEKEAPGRRRRLGLLATVW) are Cytoplasmic-facing. A helical membrane pass occupies residues 37 to 56 (LTFYNIAMTAGWLVLAIAMV). Over 57-75 (RFYMEKGTHKGLYKSIQKT) the chain is Lumenal. A helical transmembrane segment spans residues 76–92 (LKFFQTFALLEIVHCLI). The Cytoplasmic segment spans residues 93-102 (GIVPTSVIVA). The chain crosses the membrane as a helical span at residues 103-120 (GVQVSSRIFMVWLITHSI). The Lumenal portion of the chain corresponds to 121–126 (KPIQNE). The chain crosses the membrane as a helical span at residues 127–141 (ESVVLFLVAWTVTEI). Residues 142–164 (TRYSFYTFSLLDHLPYFIKWARY) are Cytoplasmic-facing. Residues 165–182 (NFFIILYPVGVVGELLTI) form a helical membrane-spanning segment. Residues Tyr-171 and Glu-178 contribute to the active site. At 183–212 (YAALPYVKKTGMFSIRLPNKYNVSFDYYYF) the chain is on the lumenal side. Asn-204 carries N-linked (GlcNAc...) asparagine glycosylation. Residues 213–230 (LLITMASYIPLFPQLYFH) traverse the membrane as a helical segment. The Cytoplasmic segment spans residues 231–249 (MLRQRRKVLHGEVIVEKDD).

This sequence belongs to the very long-chain fatty acids dehydratase HACD family. May interact with enzymes of the ELO family (including ELOVL1); with those enzymes that mediate condensation, the first of the four steps of the reaction cycle responsible for fatty acids elongation, may be part of a larger fatty acids elongase complex. Interacts with TECR. Skeletal muscle.

Its subcellular location is the endoplasmic reticulum membrane. It catalyses the reaction a very-long-chain (3R)-3-hydroxyacyl-CoA = a very-long-chain (2E)-enoyl-CoA + H2O. The catalysed reaction is (3R)-hydroxyhexadecanoyl-CoA = (2E)-hexadecenoyl-CoA + H2O. The enzyme catalyses (3R)-hydroxyoctadecanoyl-CoA = (2E)-octadecenoyl-CoA + H2O. It carries out the reaction (3R)-hydroxyeicosanoyl-CoA = (2E)-eicosenoyl-CoA + H2O. It catalyses the reaction (3R)-hydroxydocosanoyl-CoA = (2E)-docosenoyl-CoA + H2O. The catalysed reaction is (3R)-hydroxytetracosanoyl-CoA = (2E)-tetracosenoyl-CoA + H2O. The enzyme catalyses (3R)-hydroxyhexacosanoyl-CoA = (2E)-hexacosenoyl-CoA + H2O. The protein operates within lipid metabolism; fatty acid biosynthesis. In terms of biological role, catalyzes the third of the four reactions of the long-chain fatty acids elongation cycle. This endoplasmic reticulum-bound enzymatic process, allows the addition of two carbons to the chain of long- and very long-chain fatty acids/VLCFAs per cycle. This enzyme catalyzes the dehydration of the 3-hydroxyacyl-CoA intermediate into trans-2,3-enoyl-CoA, within each cycle of fatty acid elongation. Thereby, it participates in the production of VLCFAs of different chain lengths that are involved in multiple biological processes as precursors of membrane lipids and lipid mediators. This is Very-long-chain (3R)-3-hydroxyacyl-CoA dehydratase 1 (HACD1) from Canis lupus familiaris (Dog).